We begin with the raw amino-acid sequence, 240 residues long: Ribosomal RNA small subunit methyltransferase I (240 aa).

Belongs to the methyltransferase superfamily. RsmI family.

It localises to the cytoplasm. It catalyses the reaction cytidine(1402) in 16S rRNA + S-adenosyl-L-methionine = 2'-O-methylcytidine(1402) in 16S rRNA + S-adenosyl-L-homocysteine + H(+). Catalyzes the 2'-O-methylation of the ribose of cytidine 1402 (C1402) in 16S rRNA. The chain is Ribosomal RNA small subunit methyltransferase I from Leptospira biflexa serovar Patoc (strain Patoc 1 / ATCC 23582 / Paris).